A 119-amino-acid chain; its full sequence is Large ribosomal subunit protein uL18 (119 aa).

This sequence belongs to the universal ribosomal protein uL18 family. Part of the 50S ribosomal subunit; part of the 5S rRNA/L5/L18/L25 subcomplex. Contacts the 5S and 23S rRNAs.

In terms of biological role, this is one of the proteins that bind and probably mediate the attachment of the 5S RNA into the large ribosomal subunit, where it forms part of the central protuberance. The protein is Large ribosomal subunit protein uL18 of Anaeromyxobacter dehalogenans (strain 2CP-1 / ATCC BAA-258).